Consider the following 496-residue polypeptide: Galactan beta-1,4-galactosyltransferase GALS1 (496 aa).

The helical transmembrane segment at 22-42 (IIATLLALSLVMIVWNLPPYY) threads the bilayer. The region spanning 232–464 (DYLYCGSSLY…AKKKVTLYNK (233 aa)) is the GT92 domain.

It belongs to the glycosyltransferase 92 family. In terms of tissue distribution, expressed in root vasculature, mature leaves, trichomes, flowers, siliques and seeds.

It is found in the golgi apparatus membrane. Involved in the biosynthesis of beta-1,4-galactan. Can transfer galactose residues from UDP-galactose to beta-1,4-galactopentaose in vitro. Forms specifically beta-1,4-galactosyl linkages and can add successive beta-1,4-galactosyl residues to the acceptor. Beta-1,4-galactans are abundant polysaccharides in plant cell walls and are found as side-chain of rhamnogalacturonan I, which is a major component of pectin. In Arabidopsis thaliana (Mouse-ear cress), this protein is Galactan beta-1,4-galactosyltransferase GALS1.